The sequence spans 504 residues: ATP synthase subunit alpha (504 aa).

Position 169–176 (169–176) interacts with ATP; it reads GDRQTGKT.

It belongs to the ATPase alpha/beta chains family. F-type ATPases have 2 components, CF(1) - the catalytic core - and CF(0) - the membrane proton channel. CF(1) has five subunits: alpha(3), beta(3), gamma(1), delta(1), epsilon(1). CF(0) has three main subunits: a(1), b(2) and c(9-12). The alpha and beta chains form an alternating ring which encloses part of the gamma chain. CF(1) is attached to CF(0) by a central stalk formed by the gamma and epsilon chains, while a peripheral stalk is formed by the delta and b chains.

The protein localises to the cell membrane. It catalyses the reaction ATP + H2O + 4 H(+)(in) = ADP + phosphate + 5 H(+)(out). Its function is as follows. Produces ATP from ADP in the presence of a proton gradient across the membrane. The alpha chain is a regulatory subunit. The chain is ATP synthase subunit alpha from Clostridium botulinum (strain Alaska E43 / Type E3).